Here is a 233-residue protein sequence, read N- to C-terminus: Small ribosomal subunit protein uS3 (233 aa).

The region spanning 39–107 (VRQYLKKELA…PAQINISEVR (69 aa)) is the KH type-2 domain.

Belongs to the universal ribosomal protein uS3 family. As to quaternary structure, part of the 30S ribosomal subunit. Forms a tight complex with proteins S10 and S14.

Binds the lower part of the 30S subunit head. Binds mRNA in the 70S ribosome, positioning it for translation. The polypeptide is Small ribosomal subunit protein uS3 (Photorhabdus laumondii subsp. laumondii (strain DSM 15139 / CIP 105565 / TT01) (Photorhabdus luminescens subsp. laumondii)).